The sequence spans 635 residues: tRNA 5-methylaminomethyl-2-thiouridine biosynthesis bifunctional protein MnmC (635 aa).

Residues 1 to 231 (MPITPASLSF…KRQMLRGRYL (231 aa)) form a tRNA (mnm(5)s(2)U34)-methyltransferase region. The interval 249-635 (IGAGVAGTSI…RPARTLRGED (387 aa)) is FAD-dependent cmnm(5)s(2)U34 oxidoreductase.

In the N-terminal section; belongs to the methyltransferase superfamily. tRNA (mnm(5)s(2)U34)-methyltransferase family. This sequence in the C-terminal section; belongs to the DAO family. It depends on FAD as a cofactor.

The protein resides in the cytoplasm. The catalysed reaction is 5-aminomethyl-2-thiouridine(34) in tRNA + S-adenosyl-L-methionine = 5-methylaminomethyl-2-thiouridine(34) in tRNA + S-adenosyl-L-homocysteine + H(+). Its function is as follows. Catalyzes the last two steps in the biosynthesis of 5-methylaminomethyl-2-thiouridine (mnm(5)s(2)U) at the wobble position (U34) in tRNA. Catalyzes the FAD-dependent demodification of cmnm(5)s(2)U34 to nm(5)s(2)U34, followed by the transfer of a methyl group from S-adenosyl-L-methionine to nm(5)s(2)U34, to form mnm(5)s(2)U34. In Azoarcus sp. (strain BH72), this protein is tRNA 5-methylaminomethyl-2-thiouridine biosynthesis bifunctional protein MnmC.